We begin with the raw amino-acid sequence, 472 residues long: Doublesex- and mab-3-related transcription factor 3 (472 aa).

A DNA-binding region (DM) is located at residues 29 to 76 (CARCRNHGVLSWLKGHKRYCRFKDCTCEKCILIIERQRVMAAQVALRR). Disordered stretches follow at residues 89-128 (DSLRALPGPPPPGDAVAAPQPPPASQPSQPQPPRPAAELA) and 155-191 (EERLGDGKSADNTEVFSDKDTDQRSSPDVAKSKGCFT). Residues 95–123 (PGPPPPGDAVAAPQPPPASQPSQPQPPRP) are compositionally biased toward pro residues. A compositionally biased stretch (basic and acidic residues) spans 155–179 (EERLGDGKSADNTEVFSDKDTDQRS). The DMA domain occupies 249–284 (RPPLEVLKKIFPNQKPTVLELILKGCGGDLVSAVEV). The interval 430–472 (TEDPRISIPDDGCPFVSKQSIYTEDDYDERSDSSDSRTLNTSS) is disordered.

This sequence belongs to the DMRT family. In terms of assembly, may homodimerize. As to expression, expressed in testis.

The protein resides in the nucleus. Its function is as follows. Probable transcription factor that plays a role in configuring the spinal circuits controlling stride in vertebrates. Involved in neuronal specification within specific subdivision of spinal cord neurons and in the development of a coordinated locomotor network controlling limb movements. May regulate transcription during sexual development. The sequence is that of Doublesex- and mab-3-related transcription factor 3 (DMRT3) from Homo sapiens (Human).